A 497-amino-acid polypeptide reads, in one-letter code: Sperm motility kinase Z (497 aa).

A Protein kinase domain is found at Tyr28–Leu275. Residues Leu34 to Val42 and Lys57 contribute to the ATP site. Residue Asp146 is the Proton acceptor of the active site. The 41-residue stretch at Phe292–Ala332 folds into the UBA domain. Disordered stretches follow at residues Thr383 to Gln410 and Ser439 to Leu460.

It belongs to the protein kinase superfamily. CAMK Ser/Thr protein kinase family. Smok subfamily.

It carries out the reaction L-seryl-[protein] + ATP = O-phospho-L-seryl-[protein] + ADP + H(+). The catalysed reaction is L-threonyl-[protein] + ATP = O-phospho-L-threonyl-[protein] + ADP + H(+). May play a role in sperm motility, especially in the regulation of flagellar function. The polypeptide is Sperm motility kinase Z (Gm4922) (Mus musculus (Mouse)).